Reading from the N-terminus, the 163-residue chain is MINNVVLVGRMTKDAELRYTPSQVAVATFTLAVNRTFKSQNGEREADFINCVIWRQPAENLANWAKKGALIGITGRIQTRNYENQQGQRVYVTEVVADNFQMLESRATREGGSTGSFNGGFNNNTSSSNSYSAPAQQTPNFGRDDSPFGNSNPMDISDDDLPF.

One can recognise an SSB domain in the interval Met1–Glu104. The segment at Arg109–Phe163 is disordered. Residues Gly119 to Ser130 show a composition bias toward low complexity. Residues Tyr131 to Asn140 show a composition bias toward polar residues. The Important for interaction with partner proteins signature appears at Asp158 to Phe163.

Homotetramer.

Its function is as follows. Plays an important role in DNA replication, recombination and repair. Binds to ssDNA and to an array of partner proteins to recruit them to their sites of action during DNA metabolism. This chain is Single-stranded DNA-binding protein 2 (ssb2), found in Streptococcus pyogenes serotype M18 (strain MGAS8232).